The following is a 457-amino-acid chain: Glycine receptor subunit alpha-1 (457 aa).

Residues 1–28 form the signal peptide; the sequence is MYSFNTLRFYLWETIVFFSLAASKEAEA. The Extracellular segment spans residues 29 to 250; sequence ARSAPKPMSP…RFHLERQMGY (222 aa). N-linked (GlcNAc...) asparagine glycosylation is present at N66. Positions 93 and 157 each coordinate glycine. The cysteines at positions 166 and 180 are disulfide-linked. E220 and D222 together coordinate Zn(2+). A disulfide bridge connects residues C226 and C237. Strychnine is bound at residue 230-235; the sequence is YNTGKF. T232 contributes to the glycine binding site. H243 lines the Zn(2+) pocket. A helical membrane pass occupies residues 251–272; that stretch reads YLIQMYIPSLLIVILSWISFWI. Residues 273–277 are Cytoplasmic-facing; sequence NMDAA. A helical transmembrane segment spans residues 278–298; it reads PARVGLGITTVLTMTTQSSGS. Residues 299–309 are Extracellular-facing; it reads RASLPKVSYVK. A helical membrane pass occupies residues 310–330; sequence AIDIWMAVCLLFVFSALLEYA. Residues 331 to 425 are Cytoplasmic-facing; that stretch reads AVNFVSRQHK…FIQRAKKIDK (95 aa). Positions 391 to 410 are disordered; the sequence is KGANNNNTTNPPPAPSKSPE. Residues 426–446 traverse the membrane as a helical segment; that stretch reads ISRIGFPMAFLIFNMFYWIIY. At 447–457 the chain is on the extracellular side; it reads KIVRREDVHNK.

Belongs to the ligand-gated ion channel (TC 1.A.9) family. Glycine receptor (TC 1.A.9.3) subfamily. GLRA1 sub-subfamily. In terms of assembly, interacts with GLRB to form heteropentameric channels; this is probably the predominant form in vivo. Heteropentamer composed of four GLRA1 subunits and one GLRB subunit. Heteropentamer composed of two GLRA1 and three GLRB. Heteropentamer composed of three GLRA1 and two GLRB. Homopentamer (in vitro). Both homopentamers and heteropentamers form functional ion channels, but their characteristics are subtly different. As to expression, detected in spinal cord neurons. Detected in brain stem neurons. Detected at lower levels in hippocampus and cerebellum. Detected in the inner plexiform layer of the retina (at protein level).

The protein resides in the postsynaptic cell membrane. The protein localises to the synapse. It is found in the perikaryon. It localises to the cell projection. Its subcellular location is the dendrite. The protein resides in the cell membrane. The catalysed reaction is chloride(in) = chloride(out). Its activity is regulated as follows. Channel opening is triggered by extracellular glycine. Channel characteristics depend on the subunit composition; heteropentameric channels are activated by lower glycine levels and display faster desensitization. Channel opening is also triggered by taurine and beta-alanine. Inhibited by strychnine. Strychnine binding locks the channel in a closed conformation and prevents channel opening in response to extracellular glycine. Inhibited by picrotoxin. Channel activity is enhanced by 5 uM Zn(2+) and inhibited by 100 uM Zn(2+). Its function is as follows. Subunit of heteromeric glycine-gated chloride channels. Plays an important role in the down-regulation of neuronal excitability. Contributes to the generation of inhibitory postsynaptic currents. Channel activity is potentiated by ethanol. Potentiation of channel activity by intoxicating levels of ethanol contribute to the sedative effects of ethanol. The sequence is that of Glycine receptor subunit alpha-1 (Glra1) from Mus musculus (Mouse).